A 111-amino-acid polypeptide reads, in one-letter code: MSSSEAVTREYTINLHKRLYGTTFKDRAPKAVKQVKLFAQKIMGTKDVRIDNKLNKFLWSQGIKNVPHRVRVTLSRKRNEDENATEKLYTVASLVIVKSFKGLQTKKVADN.

Belongs to the eukaryotic ribosomal protein eL31 family.

In Dictyostelium discoideum (Social amoeba), this protein is Large ribosomal subunit protein eL31 (rpl31).